The following is a 454-amino-acid chain: MTTILKHLPINQRVGIAFSGGLDTSAALLWMQKKGAIPYAYTANLGQPDEEDYDAIPRKAMEYGAEKARLIDCRKQLVAEGIAAIQCGAFHNTTAGVTYFNTTPLGRAVTGTMLVAAMKEDGVNIWGDGSTYKGNDIERFYRYGLLTNAELKIYKPWLDTDFIDELGGRHEMSEFMIQSGFDYKMSTEKAYSTDSNMLGATHEAKDLEFLNSSVKIVNPIMGVKFWDENVVVKAEEVSVRFERGYPVALNGVVFDDSVELMMEANRIGGRHGLGMSDQIENRIIEAKSRGIYEAPGMALLHIAYERLLTGIHNEDTIEQYHANGRVLGRLLYQGRWFDPQALMLRDSAQRWVASEITGEVTLELRRGNDYSILNTVSENLTYQPERLTMEKGDSVFSPDDRIGQLTMRNLDITDTRKKLFSYATTGLLSASAEVGLPQVDNNNLTARGLQDKSK.

Residues 17-25 (AFSGGLDTS) and Ala-43 contribute to the ATP site. Tyr-99 serves as a coordination point for L-citrulline. ATP contacts are provided by Gly-129 and Thr-131. Thr-131, Asn-135, and Asp-136 together coordinate L-aspartate. Asn-135 contacts L-citrulline. Asp-136 lines the ATP pocket. Positions 139 and 192 each coordinate L-citrulline. Asp-194 provides a ligand contact to ATP. Thr-201, Glu-203, and Glu-280 together coordinate L-citrulline.

It belongs to the argininosuccinate synthase family. Type 2 subfamily. As to quaternary structure, homotetramer.

It is found in the cytoplasm. It catalyses the reaction L-citrulline + L-aspartate + ATP = 2-(N(omega)-L-arginino)succinate + AMP + diphosphate + H(+). Its pathway is amino-acid biosynthesis; L-arginine biosynthesis; L-arginine from L-ornithine and carbamoyl phosphate: step 2/3. In Yersinia enterocolitica serotype O:8 / biotype 1B (strain NCTC 13174 / 8081), this protein is Argininosuccinate synthase.